A 475-amino-acid polypeptide reads, in one-letter code: Ubiquilin-like protein (475 aa).

Positions 31–105 (TRVIVKTAGN…IYLVIKSKQG (75 aa)) constitute a Ubiquitin-like domain. Disordered stretches follow at residues 113 to 138 (FRDLPTNDPCHRDRNTKGNSSRVHQP) and 305 to 325 (QVQSSPPPPPPSQEQQDQLTQ). The span at 129–138 (KGNSSRVHQP) shows a compositional bias: polar residues.

This is Ubiquilin-like protein (UBQLNL) from Homo sapiens (Human).